Here is a 91-residue protein sequence, read N- to C-terminus: Class I hydrophobin 3 (91 aa).

An N-terminal signal peptide occupies residues 1 to 17 (MLFRLFTIPSIALGVLG). 4 disulfides stabilise this stretch: Cys-31–Cys-70, Cys-35–Cys-61, Cys-36–Cys-53, and Cys-71–Cys-87.

It belongs to the fungal hydrophobin family. In terms of assembly, self-assembles to form functional amyloid fibrils called rodlets. Self-assembly into fibrillar rodlets occurs spontaneously at hydrophobic:hydrophilic interfaces and the rodlets further associate laterally to form amphipathic monolayers. As to expression, expressed in conidia.

The protein resides in the secreted. The protein localises to the cell wall. Functionally, aerial growth, conidiation, and dispersal of filamentous fungi in the environment rely upon a capability of their secreting small amphipathic proteins called hydrophobins (HPBs) with low sequence identity. Class I can self-assemble into an outermost layer of rodlet bundles on aerial cell surfaces, conferring cellular hydrophobicity that supports fungal growth, development and dispersal; whereas Class II form highly ordered films at water-air interfaces through intermolecular interactions but contribute nothing to the rodlet structure. HYD3 is a class I hydrophobin located on the conidial surface that activates specifically the humoral and cellular immunity of Metarhizium acridum's own host insect, Locusta migratoria manilensis (Meyen) but not that of other non-host insects. Improves the resistance of locusts to both specialist and generalist fungal pathogens (wide host range) when topically applied to the cuticle, but has no effect on the fungal resistance of other insects, including Spodoptera frugiperda and Galleria mellonella. The sequence is that of Class I hydrophobin 3 from Metarhizium acridum (strain CQMa 102).